Here is a 436-residue protein sequence, read N- to C-terminus: 3-oxo-tetronate kinase (436 aa).

ATP is bound by residues serine 272, glycine 372–threonine 375, and glycine 415.

The protein belongs to the four-carbon acid sugar kinase family.

It catalyses the reaction 3-dehydro-L-erythronate + ATP = 3-dehydro-4-O-phospho-L-erythronate + ADP + H(+). It carries out the reaction 3-dehydro-D-erythronate + ATP = 3-dehydro-4-O-phospho-D-erythronate + ADP + H(+). Catalyzes the ATP-dependent phosphorylation of 3-oxo-tetronate to 3-oxo-tetronate 4-phosphate. This Brucella melitensis biotype 1 (strain ATCC 23456 / CCUG 17765 / NCTC 10094 / 16M) protein is 3-oxo-tetronate kinase.